Consider the following 78-residue polypeptide: 4-methyl-3-hydroxyanthranilic acid carrier protein (78 aa).

Ser33 carries the post-translational modification O-(pantetheine 4'-phosphoryl)serine.

Belongs to the acyl carrier protein (ACP) family. Post-translationally, 4'-phosphopantetheine is transferred from CoA to a specific serine of the apo-form of this carrier protein.

The protein operates within antibiotic biosynthesis. Involved in the biosynthesis of actinomycin. Acts as a carrier in the transfer and thioesterification of 4-methyl-3-hydroxyanthranilic acid (4-MHA). In Streptomyces anulatus (Streptomyces chrysomallus), this protein is 4-methyl-3-hydroxyanthranilic acid carrier protein.